The following is a 95-amino-acid chain: MAIKAGEEVIFTVPIKKIKKIVPRWKRAPRAVKFVREFVARHAKAQEVIIDPKVNEKIWERGIEKPPSKLRVKVKVEEEKREGEETVRIAYVTLA.

This sequence belongs to the eukaryotic ribosomal protein eL31 family. In terms of assembly, part of the 50S ribosomal subunit.

This chain is Large ribosomal subunit protein eL31, found in Pyrococcus furiosus (strain ATCC 43587 / DSM 3638 / JCM 8422 / Vc1).